We begin with the raw amino-acid sequence, 108 residues long: Transmembrane protein 141 (108 aa).

2 helical membrane-spanning segments follow: residues 32 to 52 and 58 to 78; these read MKGV…QMFI and YPLQ…SYGV.

The protein belongs to the TMEM141 family.

It localises to the membrane. This is Transmembrane protein 141 (TMEM141) from Homo sapiens (Human).